A 518-amino-acid chain; its full sequence is Chromosomal replication initiator protein DnaA (518 aa).

Positions 1-76 (METDGGDFPS…RALSEAYGSP (76 aa)) are domain I, interacts with DnaA modulators. The domain II stretch occupies residues 76–176 (PIRLAVTVDP…RRPTTRIENS (101 aa)). A disordered region spans residues 91–174 (LTPERTGEHS…QPRRPTTRIE (84 aa)). Positions 124–135 (DGLHLDERRSGS) are enriched in basic and acidic residues. Residues 136 to 147 (LEEDSPLDDSDP) show a composition bias toward acidic residues. The tract at residues 177–393 (RLNPKYIFET…GALIRVTAFA (217 aa)) is domain III, AAA+ region. 4 residues coordinate ATP: G221, G223, K224, and T225. The interval 394–518 (SLNRQPVDMQ…TNRIKKQSGA (125 aa)) is domain IV, binds dsDNA.

This sequence belongs to the DnaA family. As to quaternary structure, oligomerizes as a right-handed, spiral filament on DNA at oriC.

It is found in the cytoplasm. Functionally, plays an essential role in the initiation and regulation of chromosomal replication. ATP-DnaA binds to the origin of replication (oriC) to initiate formation of the DNA replication initiation complex once per cell cycle. Binds the DnaA box (a 9 base pair repeat at the origin) and separates the double-stranded (ds)DNA. Forms a right-handed helical filament on oriC DNA; dsDNA binds to the exterior of the filament while single-stranded (ss)DNA is stabiized in the filament's interior. The ATP-DnaA-oriC complex binds and stabilizes one strand of the AT-rich DNA unwinding element (DUE), permitting loading of DNA polymerase. After initiation quickly degrades to an ADP-DnaA complex that is not apt for DNA replication. Binds acidic phospholipids. The polypeptide is Chromosomal replication initiator protein DnaA (Kineococcus radiotolerans (strain ATCC BAA-149 / DSM 14245 / SRS30216)).